Reading from the N-terminus, the 194-residue chain is Orotate phosphoribosyltransferase (194 aa).

5-phospho-alpha-D-ribose 1-diphosphate-binding positions include Arg102, Lys103, Lys106, His108, and 129 to 137 (EDVVTTGGS). Thr133 and Arg161 together coordinate orotate.

This sequence belongs to the purine/pyrimidine phosphoribosyltransferase family. PyrE subfamily. As to quaternary structure, homodimer. The cofactor is Mg(2+).

The enzyme catalyses orotidine 5'-phosphate + diphosphate = orotate + 5-phospho-alpha-D-ribose 1-diphosphate. Its pathway is pyrimidine metabolism; UMP biosynthesis via de novo pathway; UMP from orotate: step 1/2. Its function is as follows. Catalyzes the transfer of a ribosyl phosphate group from 5-phosphoribose 1-diphosphate to orotate, leading to the formation of orotidine monophosphate (OMP). In Prochlorococcus marinus (strain MIT 9211), this protein is Orotate phosphoribosyltransferase.